The chain runs to 682 residues: MDKLENKSMANYDEYRAVVICASFSDCNQVLTTIKSIVCHNRFIKFYVINNDFPTEWFVSMQKKLAKLDCPIVNARVDASLVSNFKTDISYTVFLRYFVADFVEEEQALYLDCDIVVTRDLSEIFAVDLGSHPLVAVRDLGGEVYFGEQIFNSGVLLINVNYWRENDIAGQLIEMTDNLHDKVTQDDQSILNMFFENRWVELPFPYNCITLHTTFSDYEPEKGLYPPVIHYLPERKPWKEYTQSIYREVWWFYQGLDWSDIQEPVGALTQKMVEGEDDSSLSCLVYTYSCDLLHINYLIQALPSCHFYIAAPVVVAEPITRLLQYPNVSVSSDIAGIPALLESLEAKSQLLLDINAGDEVGDIIARFKSSGKPVFAFDSTVHGQQGQEVFPADNPEVMVQAIEKLGLAEPEERQISVLSIDQSLDYLLEKGASVVRFGDGEMDLIAGRGIPYQEYDPELSARLREMMAMESNERLMICLSDVFTGLERYSIDAQNFWKAHLQHHLADYLEICRAPWYGSTFISRPYIDLEDKTPSAGYFAKLKQLWQDKDLLIVEGLTSRSGVGNDLFDGARSIKRIICPSRNAYSKLEAIKQAVREHADNRLILTMLGPTAKVLVYDLVQEGYRALDIGHIDSEYEWFQMGASHKIKLSHKHTAEHNFDQDIEYRDDQAYDSQIVANLAQE.

Residues 21-26 (CASFSD) and 112-113 (DC) each bind UDP. D112, D114, and H230 together coordinate Mn(2+). 230-236 (HYLPERK) serves as a coordination point for UDP.

Belongs to the glycosyltransferase 8 family. Part of the accessory SecA2/SecY2 protein translocation apparatus required to export cell wall protein GspB.

Part of the accessory SecA2/SecY2 system specifically required to export GspB, a serine-rich repeat cell wall protein encoded upstream in the same operon. This Streptococcus gordonii protein is Probable glycosyl transferase Gly (gly).